The following is a 243-amino-acid chain: Carboxy-S-adenosyl-L-methionine synthase (243 aa).

S-adenosyl-L-methionine-binding positions include Y40, 65–67 (GCS), 90–91 (DN), 118–119 (DI), N133, and R200.

The protein belongs to the class I-like SAM-binding methyltransferase superfamily. Cx-SAM synthase family. In terms of assembly, homodimer.

The enzyme catalyses prephenate + S-adenosyl-L-methionine = carboxy-S-adenosyl-L-methionine + 3-phenylpyruvate + H2O. Its function is as follows. Catalyzes the conversion of S-adenosyl-L-methionine (SAM) to carboxy-S-adenosyl-L-methionine (Cx-SAM). The sequence is that of Carboxy-S-adenosyl-L-methionine synthase from Shewanella sp. (strain ANA-3).